The primary structure comprises 171 residues: Voltage-dependent P/Q-type calcium channel subunit alpha-1A (171 aa).

A helical transmembrane segment spans residues 1–11; that stretch reads FVTVLGSITDI. Residues 1-171 form an IV repeat; it reads FVTVLGSITD…LMLNLFVAVI (171 aa). Residues 12-18 are Extracellular-facing; the sequence is LVTEFGN. Residues 19–37 traverse the membrane as a helical segment; that stretch reads NFINLSFLRLFRAARLIKL. Residues 38–56 lie on the Cytoplasmic side of the membrane; that stretch reads LRQGYTIRILLWTFVQSFK. A helical transmembrane segment spans residues 57 to 76; it reads ALPYVCLLIAMLFFIYAIIG. Topologically, residues 77-143 are extracellular; the sequence is MQVFGNIGIE…ENSGIKEDEC (67 aa). A helical transmembrane segment spans residues 144–168; sequence GNEFAYFYFVSFIFLCSFLMLNLFV. The Cytoplasmic segment spans residues 169–171; the sequence is AVI.

The protein belongs to the calcium channel alpha-1 subunit (TC 1.A.1.11) family. CACNA1A subfamily. In terms of assembly, voltage-dependent calcium channels are multisubunit complexes, consisting of alpha-1, alpha-2, beta and delta subunits in a 1:1:1:1 ratio. The channel activity is directed by the pore-forming and voltage-sensitive alpha-1 subunit. In many cases, this subunit is sufficient to generate voltage-sensitive calcium channel activity. The auxiliary subunits beta and alpha-2/delta linked by a disulfide bridge regulate the channel activity.

It is found in the cell membrane. The enzyme catalyses Ca(2+)(in) = Ca(2+)(out). In terms of biological role, the isoform alpha-1A gives rise to P and/or Q-type calcium currents. P/Q-type calcium channels belong to the 'high-voltage activated' (HVA) group. This chain is Voltage-dependent P/Q-type calcium channel subunit alpha-1A (CACNA1A), found in Gallus gallus (Chicken).